Consider the following 355-residue polypeptide: Nematocyst expressed protein 3 (355 aa).

The N-terminal stretch at 1–18 (MKLTYILLIAVVGVAIEA) is a signal peptide. ShKT domains lie at 50-89 (CKDV…CKLC), 107-134 (QPQQ…CQLC), and 140-182 (SGPV…CNTY). Intrachain disulfides connect Cys50–Cys89, Cys57–Cys82, Cys71–Cys86, Cys116–Cys131, Cys149–Cys175, and Cys158–Cys179. The propeptide occupies 92–355 (KRSKKQSDYM…KKSKSHKKQH (264 aa)). A disordered region spans residues 202–355 (YQPNAMPTPP…KKSKSHKKQH (154 aa)). A compositionally biased stretch (pro residues) spans 207–221 (MPTPPQGVTPAPLPP). 3 stretches are compositionally biased toward low complexity: residues 222–232 (YFQQQGYGYPQ), 240–270 (VQPG…TTTE), and 277–332 (TEAA…AQSD). Residues 335 to 355 (NKKKHKKDKAQKKSKSHKKQH) are compositionally biased toward basic residues.

This sequence belongs to the NEP3 family. In terms of tissue distribution, nematocytes. In late planulae, transcripts are found throughout the ectoderm in nematocytes, with high concentration of expressing cells in the oral pole. In primary polyps, is expressed in nematocytes in the body wall and physa ectoderm and in the upper and lower pharynx.

It localises to the nematocyst. Its subcellular location is the secreted. Neurotoxin. In vivo, induces pronounced contraction and tail twitching on zebrafish larvae, as well as death 5 hours later. The sequence is that of Nematocyst expressed protein 3 from Nematostella vectensis (Starlet sea anemone).